A 138-amino-acid chain; its full sequence is Putative nickel-responsive regulator (138 aa).

Positions 76, 87, 89, and 95 each coordinate Ni(2+).

The protein belongs to the transcriptional regulatory CopG/NikR family. Ni(2+) is required as a cofactor.

Its function is as follows. Transcriptional regulator. In Pseudomonas putida (strain W619), this protein is Putative nickel-responsive regulator.